Consider the following 152-residue polypeptide: Deoxyuridine 5'-triphosphate nucleotidohydrolase (152 aa).

Residues 71–73 (RSG), Asn84, 88–90 (LID), and Met98 contribute to the substrate site.

Belongs to the dUTPase family. It depends on Mg(2+) as a cofactor.

The enzyme catalyses dUTP + H2O = dUMP + diphosphate + H(+). The protein operates within pyrimidine metabolism; dUMP biosynthesis; dUMP from dCTP (dUTP route): step 2/2. In terms of biological role, this enzyme is involved in nucleotide metabolism: it produces dUMP, the immediate precursor of thymidine nucleotides and it decreases the intracellular concentration of dUTP so that uracil cannot be incorporated into DNA. The protein is Deoxyuridine 5'-triphosphate nucleotidohydrolase of Erwinia tasmaniensis (strain DSM 17950 / CFBP 7177 / CIP 109463 / NCPPB 4357 / Et1/99).